Here is a 261-residue protein sequence, read N- to C-terminus: Small ribosomal subunit protein eS1A (261 aa).

Positions M1 to K18 are enriched in basic residues. Residues M1–T23 form a disordered region.

It belongs to the eukaryotic ribosomal protein eS1 family. In terms of assembly, component of the small ribosomal subunit. Mature ribosomes consist of a small (40S) and a large (60S) subunit. The 40S subunit contains about 33 different proteins and 1 molecule of RNA (18S). The 60S subunit contains about 49 different proteins and 3 molecules of RNA (25S, 5.8S and 5S).

The protein localises to the cytoplasm. The polypeptide is Small ribosomal subunit protein eS1A (Trypanosoma cruzi (strain CL Brener)).